Here is a 412-residue protein sequence, read N- to C-terminus: tRNA pseudouridine synthase Pus10 (412 aa).

Residues 73–197 form the THUMP domain; it reads HEPSIKFLSN…TGSVEVQIMP (125 aa). Positions 308 and 376 each coordinate substrate.

Belongs to the pseudouridine synthase Pus10 family.

The enzyme catalyses uridine(54) in tRNA = pseudouridine(54) in tRNA. The catalysed reaction is uridine(55) in tRNA = pseudouridine(55) in tRNA. Responsible for synthesis of pseudouridine from uracil-54 and uracil-55 in the psi GC loop of transfer RNAs. This is tRNA pseudouridine synthase Pus10 from Vulcanisaeta distributa (strain DSM 14429 / JCM 11212 / NBRC 100878 / IC-017).